The primary structure comprises 190 residues: Putative manganese efflux pump MntP (190 aa).

The next 6 helical transmembrane spans lie at Ile-6 to Ile-26, Phe-36 to Phe-56, Phe-61 to Gly-81, Leu-108 to Ile-128, Ile-138 to Phe-158, and Leu-169 to Leu-189.

It belongs to the MntP (TC 9.B.29) family.

It is found in the cell inner membrane. Probably functions as a manganese efflux pump. The sequence is that of Putative manganese efflux pump MntP from Phocaeicola vulgatus (strain ATCC 8482 / DSM 1447 / JCM 5826 / CCUG 4940 / NBRC 14291 / NCTC 11154) (Bacteroides vulgatus).